A 439-amino-acid polypeptide reads, in one-letter code: tRNA-2-methylthio-N(6)-dimethylallyladenosine synthase (439 aa).

In terms of domain architecture, MTTase N-terminal spans 2 to 116 (LKVYIETMGC…ISQVIHKEKA (115 aa)). Residues Cys11, Cys47, Cys79, Cys149, Cys153, and Cys156 each contribute to the [4Fe-4S] cluster site. A Radical SAM core domain is found at 135 to 368 (KKAEVRSLLN…QNRHKEILEE (234 aa)). A TRAM domain is found at 371 to 437 (RLEVGKTHVV…KGRLMATTKN (67 aa)).

The protein belongs to the methylthiotransferase family. MiaB subfamily. In terms of assembly, monomer. [4Fe-4S] cluster serves as cofactor.

It is found in the cytoplasm. The enzyme catalyses N(6)-dimethylallyladenosine(37) in tRNA + (sulfur carrier)-SH + AH2 + 2 S-adenosyl-L-methionine = 2-methylsulfanyl-N(6)-dimethylallyladenosine(37) in tRNA + (sulfur carrier)-H + 5'-deoxyadenosine + L-methionine + A + S-adenosyl-L-homocysteine + 2 H(+). Its function is as follows. Catalyzes the methylthiolation of N6-(dimethylallyl)adenosine (i(6)A), leading to the formation of 2-methylthio-N6-(dimethylallyl)adenosine (ms(2)i(6)A) at position 37 in tRNAs that read codons beginning with uridine. The chain is tRNA-2-methylthio-N(6)-dimethylallyladenosine synthase from Helicobacter acinonychis (strain Sheeba).